A 463-amino-acid chain; its full sequence is Retinoic acid receptor RXR-gamma (463 aa).

The modulating stretch occupies residues 1–138 (MYGNYSHFMK…TSPGSLVKHI (138 aa)). Positions 16–53 (GGSPGHTGSTSMSPSVALPTGKPMDSHPSYTDTPVSAP) are disordered. NR C4-type zinc fingers lie at residues 139–159 (CAICGDRSSGKHYGVYSCEGC) and 175–199 (CRDNKDCLIDKRQRNRCQYCRYQKC). The nuclear receptor DNA-binding region spans 139–204 (CAICGDRSSG…RYQKCLVMGM (66 aa)). The segment at 205–230 (KREAVQEERQRSRERAESEAECASTG) is hinge. The NR LBD domain occupies 231 to 459 (HEDMPVERIL…TFLMEMLETP (229 aa)).

Belongs to the nuclear hormone receptor family. NR2 subfamily. Homodimer. Heterodimer with a RAR molecule. Binds DNA preferentially as a RAR/RXR heterodimer. Interacts with RARA. In terms of processing, acetylated by EP300. Expressed in the liver, but not detected in the adrenal gland (at protein level). Restricted expression in adrenal gland, kidney, liver, brain and lungs. Strong expression in heart and muscles.

The protein resides in the nucleus. The protein localises to the cytoplasm. Functionally, receptor for retinoic acid. Retinoic acid receptors bind as heterodimers to their target response elements in response to their ligands, all-trans or 9-cis retinoic acid, and regulate gene expression in various biological processes. The RAR/RXR heterodimers bind to the retinoic acid response elements (RARE) composed of tandem 5'-AGGTCA-3' sites known as DR1-DR5. The high affinity ligand for RXRs is 9-cis retinoic acid. This is Retinoic acid receptor RXR-gamma (Rxrg) from Rattus norvegicus (Rat).